The primary structure comprises 263 residues: UPF0758 protein Pden_2304 (263 aa).

Positions 141-263 constitute an MPN domain; that stretch reads VLTSWDALLD…ELSFRSEGLL (123 aa). Residues His212, His214, and Asp225 each contribute to the Zn(2+) site. Residues 212-225 carry the JAMM motif motif; the sequence is HNHPSGDPTPSQAD.

Belongs to the UPF0758 family.

In Paracoccus denitrificans (strain Pd 1222), this protein is UPF0758 protein Pden_2304.